Reading from the N-terminus, the 547-residue chain is Chaperonin GroEL (547 aa).

ATP is bound by residues 30–33, lysine 51, 87–91, glycine 415, and aspartate 496; these read TLGP and DGTTT.

The protein belongs to the chaperonin (HSP60) family. Forms a cylinder of 14 subunits composed of two heptameric rings stacked back-to-back. Interacts with the co-chaperonin GroES.

The protein localises to the cytoplasm. The enzyme catalyses ATP + H2O + a folded polypeptide = ADP + phosphate + an unfolded polypeptide.. Functionally, together with its co-chaperonin GroES, plays an essential role in assisting protein folding. The GroEL-GroES system forms a nano-cage that allows encapsulation of the non-native substrate proteins and provides a physical environment optimized to promote and accelerate protein folding. The polypeptide is Chaperonin GroEL (Mannheimia succiniciproducens (strain KCTC 0769BP / MBEL55E)).